Here is a 627-residue protein sequence, read N- to C-terminus: WPP domain-interacting tail-anchored protein 2 (627 aa).

Coiled coils occupy residues 81 to 152, 188 to 218, and 312 to 542; these read CGIL…RRTL, LEKSLSRELELEKKLMEFQQNEEQLKLKLHY, and TLRE…KILR. The disordered stretch occupies residues 577 to 597; that stretch reads SLQEDERTREEPEKQSVSEKS. Basic and acidic residues predominate over residues 580 to 597; sequence EDERTREEPEKQSVSEKS. Residues 606 to 626 form a helical membrane-spanning segment; it reads LKHILVVALVFVLFCSFFGVT.

As to quaternary structure, component of Ran complexes at least composed of WIT1 or WIT2, RANGAP1 or RANGAP2, and WIP1 or WIP2 or WIP3. Interacts with KAKU1. Core component of the LINC complex which is composed of inner nuclear membrane SUN domain-containing proteins coupled to outer nuclear membrane WIP and WIT proteins. The LINC complex also involves nucleoskeletal proteins CRWN/LINC and possibly KAKU4 and the cytoskeletal myosin KAKU1. Interacts with WIP1, WIP2 and WIP3. In terms of tissue distribution, ubiquitous.

It localises to the membrane. Its function is as follows. Together with WIT1, required for the nuclear envelope docking of RANGAP proteins in root tips. Plays a role in nuclear shape determination. As component of the SUN-WIP-WIT2-KAKU1 complex, mediates the transfer of cytoplasmic forces to the nuclear envelope (NE), leading to nuclear shape changes. This is WPP domain-interacting tail-anchored protein 2 (WIT2) from Arabidopsis thaliana (Mouse-ear cress).